Consider the following 599-residue polypeptide: Serine/threonine-protein kinase haspin homolog (599 aa).

The 313-residue stretch at 287–599 (PESIVKIGEG…FSDMLMDQIS (313 aa)) folds into the Protein kinase domain. ATP is bound by residues 293 to 301 (IGEGTYGEA), Lys310, 407 to 412 (EHGGKD), 448 to 453 (DLHWGN), and 486 to 488 (DFT). Asp448 serves as the catalytic Proton acceptor.

This sequence belongs to the protein kinase superfamily. Ser/Thr protein kinase family. Haspin subfamily. As to expression, expressed in meristems and primordia of root tips, lateral roots, shoot apex, leaves and flowers.

The protein localises to the cytoplasm. It is found in the perinuclear region. Its subcellular location is the nucleus. It localises to the chromosome. The protein resides in the cytoskeleton. The protein localises to the phragmoplast. The enzyme catalyses L-seryl-[protein] + ATP = O-phospho-L-seryl-[protein] + ADP + H(+). It carries out the reaction L-threonyl-[protein] + ATP = O-phospho-L-threonyl-[protein] + ADP + H(+). Functionally, threonine-protein kinase that phosphorylates histone H3 in vitro at 'Thr-3' (H3T3ph) and 'Thr-11' (H3T11ph), but not at 'Ser-10' (H3S10ph) or 'Ser-28' (H3S28ph). Plays a role in mitotic cell division during plant growth. Threonine-protein kinase that phosphorylates histone H3 in vitro at 'Thr-3' (H3T3ph), but not at 'Thr-11' (H3T11ph), 'Ser-10' (H3S10ph) or 'Ser-28' (H3S28ph). Involved in histone H3 phosphorylation in mitotic cells. Contributes to organ and plant development, as well as embryonic patterning. This Arabidopsis thaliana (Mouse-ear cress) protein is Serine/threonine-protein kinase haspin homolog.